A 151-amino-acid polypeptide reads, in one-letter code: Macrodomain Ter protein (151 aa).

This sequence belongs to the MatP family. In terms of assembly, homodimer.

Its subcellular location is the cytoplasm. Functionally, required for spatial organization of the terminus region of the chromosome (Ter macrodomain) during the cell cycle. Prevents early segregation of duplicated Ter macrodomains during cell division. Binds specifically to matS, which is a 13 bp signature motif repeated within the Ter macrodomain. This Vibrio atlanticus (strain LGP32) (Vibrio splendidus (strain Mel32)) protein is Macrodomain Ter protein.